We begin with the raw amino-acid sequence, 53 residues long: UPF0391 membrane protein PSEEN0090 (53 aa).

The next 2 membrane-spanning stretches (helical) occupy residues 4–24 (WAIT…GGIA) and 29–49 (GIAK…FFFG).

It belongs to the UPF0391 family.

The protein resides in the cell membrane. The sequence is that of UPF0391 membrane protein PSEEN0090 from Pseudomonas entomophila (strain L48).